Reading from the N-terminus, the 798-residue chain is ATP-dependent RecD2 DNA helicase (798 aa).

Residue Gly370–Thr374 coordinates ATP.

The protein belongs to the RecD family. RecD2 subfamily. Interacts with SSB (sbbA).

The protein localises to the cytoplasm. The protein resides in the nucleoid. The enzyme catalyses Couples ATP hydrolysis with the unwinding of duplex DNA at the replication fork by translocating in the 5'-3' direction. This creates two antiparallel DNA single strands (ssDNA). The leading ssDNA polymer is the template for DNA polymerase III holoenzyme which synthesizes a continuous strand.. It catalyses the reaction ATP + H2O = ADP + phosphate + H(+). In terms of biological role, in vivo may favor replication restart by preventing RecA from binding to blocked replication forks, avoiding unnecessary recombination during replication restart. Acts as a negative modulator of the RecA-ssDNA filament, may dissasemble RecA threads, can act as both a positive and negative regulator of strand exchange. Probably stabilizes or aids normal replication fork progression, is important for survival after treatment with DNA-damaging agents that can result in replication fork stress. Overcomes the inhibition of replication restart by RecA/RecO, probably by displacing RecA. Increasing levels inhibit PriA-dependent DNA replication initiation (but have little effect on ongoing replication) in vitro; may act by disturbing SsbA assembly. Probably has a role in recombinational DNA repair. Does not seem to contribute to mismatch repair. Has 5'-3' helicase activity that is probably ATP-dependent. The sequence is that of ATP-dependent RecD2 DNA helicase from Bacillus subtilis (strain 168).